Reading from the N-terminus, the 324-residue chain is Deoxyhypusine hydroxylase (324 aa).

HEAT-like PBS-type repeat units lie at residues 60–86 (LKHE…VLED) and 94–119 (RHEA…YLHR). Residues H62, E63, H95, and E96 each contribute to the Fe cation site. The span at 143–152 (EERKQEKLRQ) shows a compositional bias: basic and acidic residues. Residues 143 to 171 (EERKQEKLRQSDFASVDPAPPMPEDDEKQ) form a disordered region. 3 HEAT-like PBS-type repeats span residues 189–219 (KRYR…LAKG), 227–253 (FRHE…ALSN), and 260–287 (VRHE…FLHD). Positions 229, 230, 262, and 263 each coordinate Fe cation.

The protein belongs to the deoxyhypusine hydroxylase family. Fe(2+) serves as cofactor.

It localises to the cytoplasm. Its subcellular location is the nucleus. The enzyme catalyses [eIF5A protein]-deoxyhypusine + AH2 + O2 = [eIF5A protein]-hypusine + A + H2O. It participates in protein modification; eIF5A hypusination. Catalyzes the hydroxylation of the N(6)-(4-aminobutyl)-L-lysine intermediate to form hypusine, an essential post-translational modification only found in mature eIF-5A factor. The sequence is that of Deoxyhypusine hydroxylase (lia1) from Neurospora crassa (strain ATCC 24698 / 74-OR23-1A / CBS 708.71 / DSM 1257 / FGSC 987).